A 61-amino-acid polypeptide reads, in one-letter code: Large ribosomal subunit protein uL30 (61 aa).

This sequence belongs to the universal ribosomal protein uL30 family. As to quaternary structure, part of the 50S ribosomal subunit.

The sequence is that of Large ribosomal subunit protein uL30 from Corynebacterium urealyticum (strain ATCC 43042 / DSM 7109).